Reading from the N-terminus, the 326-residue chain is Probable cell division protein WhiA (326 aa).

Positions 275–308 (SLDELGHHADPPMTKDAVAGRIRRLLAMADKKAV) form a DNA-binding region, H-T-H motif.

This sequence belongs to the WhiA family.

Functionally, involved in cell division and chromosome segregation. This Clavibacter sepedonicus (Clavibacter michiganensis subsp. sepedonicus) protein is Probable cell division protein WhiA.